The sequence spans 320 residues: Lipoyl synthase (320 aa).

Over residues 1 to 24 (MIGKLVRDLKIPDQRHPEKAHRPD) the composition is skewed to basic and acidic residues. A disordered region spans residues 1–30 (MIGKLVRDLKIPDQRHPEKAHRPDNVQPKK). Residues C60, C65, C71, C86, C90, C93, and S300 each contribute to the [4Fe-4S] cluster site. A Radical SAM core domain is found at 72-289 (WSQGHATMMI…EKAAYGKGFL (218 aa)).

Belongs to the radical SAM superfamily. Lipoyl synthase family. [4Fe-4S] cluster serves as cofactor.

It is found in the cytoplasm. It catalyses the reaction [[Fe-S] cluster scaffold protein carrying a second [4Fe-4S](2+) cluster] + N(6)-octanoyl-L-lysyl-[protein] + 2 oxidized [2Fe-2S]-[ferredoxin] + 2 S-adenosyl-L-methionine + 4 H(+) = [[Fe-S] cluster scaffold protein] + N(6)-[(R)-dihydrolipoyl]-L-lysyl-[protein] + 4 Fe(3+) + 2 hydrogen sulfide + 2 5'-deoxyadenosine + 2 L-methionine + 2 reduced [2Fe-2S]-[ferredoxin]. It participates in protein modification; protein lipoylation via endogenous pathway; protein N(6)-(lipoyl)lysine from octanoyl-[acyl-carrier-protein]: step 2/2. In terms of biological role, catalyzes the radical-mediated insertion of two sulfur atoms into the C-6 and C-8 positions of the octanoyl moiety bound to the lipoyl domains of lipoate-dependent enzymes, thereby converting the octanoylated domains into lipoylated derivatives. In Cereibacter sphaeroides (strain ATCC 17029 / ATH 2.4.9) (Rhodobacter sphaeroides), this protein is Lipoyl synthase.